A 132-amino-acid polypeptide reads, in one-letter code: Vesicle transport protein GOT1A (132 aa).

Topologically, residues 1 to 16 are cytoplasmic; that stretch reads MISITEWQKIGVGTTG. The chain crosses the membrane as a helical span at residues 17-37; sequence FGIFFILFGMLLYFDSVLLAF. At 38 to 39 the chain is on the lumenal side; it reads GN. Residues 40 to 60 form a helical membrane-spanning segment; sequence LLFLTGLSLIIGLRRTFSFFF. Residues 61–68 lie on the Cytoplasmic side of the membrane; it reads QRHKFKGT. The chain crosses the membrane as a helical span at residues 69 to 89; sequence SFFLGGVVIVLLRWPLLGMCL. The Lumenal segment spans residues 90 to 100; sequence ETYGFFSLFRG. Residues 101–121 form a helical membrane-spanning segment; sequence FFPVAFGFLGSASNIPFLSAL. Residues 122–132 are Cytoplasmic-facing; sequence FQRLQGTSSMV.

Belongs to the GOT1 family.

The protein localises to the golgi apparatus membrane. Its function is as follows. May be involved in fusion of ER-derived transport vesicles with the Golgi complex. This is Vesicle transport protein GOT1A from Bos taurus (Bovine).